A 313-amino-acid chain; its full sequence is LUC7-related splicing factor homolog (313 aa).

The segment at 237–313 (RKEREEKLGS…RDRRDRDRRY (77 aa)) is disordered.

Belongs to the Luc7 family.

The sequence is that of LUC7-related splicing factor homolog from Caenorhabditis elegans.